Consider the following 133-residue polypeptide: Putative biopolymer transport protein ExbD-like 1 (133 aa).

Residues 1–15 (MNYDNYWDEDKPELN) lie on the Cytoplasmic side of the membrane. Residues 16 to 32 (ITPLVDVMLVLLAILMV) traverse the membrane as a helical segment. At 33–133 (TTPTLTYKEE…FLKVSLITSP (101 aa)) the chain is on the periplasmic side.

The protein belongs to the ExbD/TolR family.

It localises to the cell inner membrane. The polypeptide is Putative biopolymer transport protein ExbD-like 1 (Helicobacter pylori (strain ATCC 700392 / 26695) (Campylobacter pylori)).